The primary structure comprises 707 residues: MVQKYQSPVRVYKYPFELVMAAYEKRFPTCPQIPVFLGSDILQEHKSEDGALHVVERSCKLNVDAPRLLKKIAGVEFVYFIQKNTVNWKDRTLLIEAHNETFSSRVLVNETCSYSVHPENEEWTCFEQTASLDIKSFFGFESTVEKIAMKQYTANIKRGKEVIEFYLNELISQGITHLPKWTPGVPAGWHPLQAFRSGITRSNQAEQTASQGPCKADAGSHSLAAEPSTPDTDKLEADYIERYLGQLTPMQESALIHLRQWLQETHKGKIPKDEHILRFLRARDFNMEKAREMLCQSLSWRKQHQVDYILQTWQPPRVLEEYYAGGWHYHDKDGRPLYILRLGQVDTKGLVKALGEEAILRHVLSINEEGQKRCEENTRQFGRPIWSWTCLVDLEGLNMRHLWRPGVKALLRIIEVVEANYPETLGRLLIVRAPRVFPVLWTLVSPFINENSRQKFLIYSGNNYQGPGGIADYVDKEIVPDFLGGECVCNIPEGGLVPKSLYQSDEDAEMSDHIRLWTETIYQSSCVWKGAPHEIIVEILEEESVITWDFDILRGDVIFSLFHSKRAPDTRQRELALAAGNAPSSNVQLIDKSWTLGVDYSRVQAPLVCREGESIQGSHVTRWPGIYILQWKMHSSASGSSMARVDDVLASLQGSSHKCKLMYYFEVLASEDFRGSMSSLESCSGFSQLSGVTNTSSKSHSSSLISR.

In terms of domain architecture, PRELI/MSF1 spans 3–175; sequence QKYQSPVRVY…YLNELISQGI (173 aa). A compositionally biased stretch (polar residues) spans 201–211; sequence RSNQAEQTASQ. Residues 201–232 form a disordered region; that stretch reads RSNQAEQTASQGPCKADAGSHSLAAEPSTPDT. Residues 315–491 form the CRAL-TRIO domain; that stretch reads PPRVLEEYYA…FLGGECVCNI (177 aa). The 150-residue stretch at 518 to 667 folds into the GOLD domain; that stretch reads TETIYQSSCV…KCKLMYYFEV (150 aa). Residues 686–695 are compositionally biased toward polar residues; that stretch reads FSQLSGVTNT. The segment at 686 to 707 is disordered; that stretch reads FSQLSGVTNTSSKSHSSSLISR. Residues 696–707 are compositionally biased toward low complexity; that stretch reads SSKSHSSSLISR.

The protein is SEC14-like protein 5 (sec14l1) of Xenopus tropicalis (Western clawed frog).